Consider the following 328-residue polypeptide: RNA 3'-terminal phosphate cyclase (328 aa).

ATP contacts are provided by residues Gln100 and 276-280; that span reads HLADQ. His302 (tele-AMP-histidine intermediate) is an active-site residue.

Belongs to the RNA 3'-terminal cyclase family. Type 1 subfamily.

Its subcellular location is the cytoplasm. It carries out the reaction a 3'-end 3'-phospho-ribonucleotide-RNA + ATP = a 3'-end 2',3'-cyclophospho-ribonucleotide-RNA + AMP + diphosphate. Functionally, catalyzes the conversion of 3'-phosphate to a 2',3'-cyclic phosphodiester at the end of RNA. The mechanism of action of the enzyme occurs in 3 steps: (A) adenylation of the enzyme by ATP; (B) transfer of adenylate to an RNA-N3'P to produce RNA-N3'PP5'A; (C) and attack of the adjacent 2'-hydroxyl on the 3'-phosphorus in the diester linkage to produce the cyclic end product. The biological role of this enzyme is unknown but it is likely to function in some aspects of cellular RNA processing. This Archaeoglobus fulgidus (strain ATCC 49558 / DSM 4304 / JCM 9628 / NBRC 100126 / VC-16) protein is RNA 3'-terminal phosphate cyclase (rtcA).